The chain runs to 660 residues: Iron(3+)-hydroxamate import system permease protein FhuB (660 aa).

18 helical membrane passes run 5–25 (IALF…ALTW), 62–82 (LAIS…FQQV), 93–113 (LGVA…AIPG), 118–138 (QFAA…VAWG), 147–167 (ILAG…LVIF), 197–217 (QLLG…LMGL), 240–260 (AIVI…IGLF), 277–297 (LMLA…IILW), 303–323 (MEVS…LWLL), 348–368 (LAFA…ALSF), 391–411 (WPRI…GCII), 424–444 (VLGI…LVPG), 447–467 (FGWL…IIMI), 479–499 (MLLA…MLQA), 528–548 (GIVM…LTIL), 567–587 (IALL…IGPL), 607–627 (MPHI…ADWC), and 635–655 (FQIP…IYLL).

It belongs to the binding-protein-dependent transport system permease family. FecCD subfamily. The complex is composed of two ATP-binding proteins (FhuC), a transmembrane protein (FhuB) and a solute-binding protein (FhuD). FhuB interacts with FhuC. FhuB interacts with FhuD. FhuB binds substrate-loaded FhuD more strongly than FhuD alone.

Its subcellular location is the cell inner membrane. Its function is as follows. Part of the ABC transporter complex FhuCDB involved in iron(3+)-hydroxamate import. Responsible for the translocation of the substrate across the membrane. This chain is Iron(3+)-hydroxamate import system permease protein FhuB (fhuB), found in Escherichia coli (strain K12).